Reading from the N-terminus, the 931-residue chain is MRHSIGLAAALLAPTLPVALGQYIRDLSTEKWTLSSRALNRTVPAQFPSQVHLDLLRAGVIGEYHGLNDFNLRWIAAANWTYTSQPIKGLLDNYDSTWLVFDGLDTFATISFCGQQIASTDNQFRQYAFDVSTALGSCKGDPVLSINFGSAPNIVDAIAQDSNSQKWPDDVQLTYEYPNRWFMRKEQSDFGWDWGPAFAPAGPWKPAYIVQLDKKESVYVLNTDLDIYRKGQINYLPPDQSQPWVVNASIDILGPLPTKPTMSIEVRDTHSGTILTSRTLNNVSVAGNAITGVTVLDGLTPKLWWPQGLGDQNLYNVSITVQSRGNQTVASVNKRTGFRTIFLNQRNITEAQRAQGIAPGANWHFEVNGHEFYAKGSNLIPPDSFWTRVTEEKMSRLFDAVVVGNQNMLRVWSSGAYLHDYIYDLADEKGILLWSEFEFSDALYPSDDAFLENVAAEIVYNVRRVNHHPSLALWAGGNEIESLMLPRVKDAAPSSYSYYVGEYEKMYISLFLPLVYENTRSISYSPSSTTEGYLYIDLSAPVPMAERYDNTTSGSYYGDTDHYDYDTSVAFDYGSYPVGRFANEFGFHSMPSLQTWQQAVDTEDLYFNSSVVMLRNHHDPAGGLMTDNYANSATGMGEMTMGVVSYYPIPSKSDHISNFSAWCHATQLFQADMYKSQIQFYRRGSGMPERQLGSLYWQLEDIWQAPSWAGIEYGGRWKVLHHVMRDIYQPVIVSPFWNYTTGSLDVYVTSDLWSPAAGTVDLTWLDLSGRPIAGNAGTPKSVPFTVGGLNSTRIYGTNVSSLGLPDTKDAVLILSLSAHGRLPNSDRTTNLTHENYATLSWPKDLKIVDPGLKIGHSSKKTTVTVEATSGVSLYTWLDYPEGVVGYFEENAFVLAPGEKKEISFTVLEDTTDGAWVRNITVQSLWDQKVRG.

A signal peptide spans 1 to 21; sequence MRHSIGLAAALLAPTLPVALG. N-linked (GlcNAc...) asparagine glycans are attached at residues Asn40, Asn79, Asn247, Asn282, Asn316, Asn326, and Asn347. Residue Glu479 is the Proton donor of the active site. 8 N-linked (GlcNAc...) asparagine glycosylation sites follow: Asn550, Asn608, Asn658, Asn738, Asn790, Asn798, Asn830, and Asn918.

The protein belongs to the glycosyl hydrolase 2 family. Beta-mannosidase A subfamily. As to quaternary structure, homodimer.

The protein resides in the secreted. The catalysed reaction is Hydrolysis of terminal, non-reducing beta-D-mannose residues in beta-D-mannosides.. It participates in glycan metabolism; N-glycan degradation. Its function is as follows. Exoglycosidase that cleaves the single beta-linked mannose residue from the non-reducing end of beta-mannosidic oligosaccharides of various complexity and length. Involved in the degradation of polymeric mannan and galactomannan. The sequence is that of Beta-mannosidase A (mndA) from Aspergillus niger (strain ATCC MYA-4892 / CBS 513.88 / FGSC A1513).